Here is a 287-residue protein sequence, read N- to C-terminus: Energy-coupling factor transporter ATP-binding protein EcfA1 (287 aa).

In terms of domain architecture, ABC transporter spans 6 to 248; the sequence is IVAEGVSYAY…ADRIRALRLD (243 aa). ATP is bound at residue 47–54; sequence GMNGSGKS.

This sequence belongs to the ABC transporter superfamily. Energy-coupling factor EcfA family. As to quaternary structure, forms a stable energy-coupling factor (ECF) transporter complex composed of 2 membrane-embedded substrate-binding proteins (S component), 2 ATP-binding proteins (A component) and 2 transmembrane proteins (T component).

The protein localises to the cell membrane. Functionally, ATP-binding (A) component of a common energy-coupling factor (ECF) ABC-transporter complex. Unlike classic ABC transporters this ECF transporter provides the energy necessary to transport a number of different substrates. The chain is Energy-coupling factor transporter ATP-binding protein EcfA1 from Symbiobacterium thermophilum (strain DSM 24528 / JCM 14929 / IAM 14863 / T).